We begin with the raw amino-acid sequence, 422 residues long: Glycine amidinotransferase, mitochondrial (422 aa).

A mitochondrion-targeting transit peptide spans 1-37 (MLRVRCLRGGSRGAEAVHYIGSMLRKSFVGWVQRSFQ). Residues Asp-253 and His-302 contribute to the active site. Cys-406 functions as the Amidino-cysteine intermediate in the catalytic mechanism.

The protein belongs to the amidinotransferase family. In terms of assembly, homodimer. Ubiquitously expressed in adult tissues, with highest levels in muscle and intermediate levels in eye, heart, liver, stomach and testis. In stage 28 embryos, expression is higher in the dorsal and ventral parts of the trunk than in the head. In middle gastrulae, expression is highest around the yolk plug, while in stage 15 and tailbud stage embryos, expression is largely restricted to the region around the presumptive notochord and gut.

It is found in the mitochondrion inner membrane. The enzyme catalyses L-arginine + glycine = guanidinoacetate + L-ornithine. The protein operates within amine and polyamine biosynthesis; creatine biosynthesis; creatine from L-arginine and glycine: step 1/2. Functionally, catalyzes the biosynthesis of guanidinoacetate, the immediate precursor of creatine. Creatine plays a vital role in energy metabolism in muscle tissues. May play a role in embryonic and central nervous system development. The polypeptide is Glycine amidinotransferase, mitochondrial (Xenopus laevis (African clawed frog)).